The primary structure comprises 307 residues: UPF0749 protein MT1871 (307 aa).

An N-terminal signal peptide occupies residues 1 to 23 (MAESDRLLGGYDPNAGYSAHAGA). 2 helical membrane-spanning segments follow: residues 67-87 (VSWM…AAAV) and 152-172 (VLSL…VTVT).

Belongs to the UPF0749 family.

It is found in the cell membrane. The protein is UPF0749 protein MT1871 of Mycobacterium tuberculosis (strain CDC 1551 / Oshkosh).